Here is an 89-residue protein sequence, read N- to C-terminus: Small ribosomal subunit protein bS20 (89 aa).

Residues 1 to 12 (MANHKSAIKRHR) show a composition bias toward basic residues. The interval 1 to 26 (MANHKSAIKRHRQSVERAGRNRAART) is disordered.

The protein belongs to the bacterial ribosomal protein bS20 family.

Functionally, binds directly to 16S ribosomal RNA. This chain is Small ribosomal subunit protein bS20, found in Desulfovibrio desulfuricans (strain ATCC 27774 / DSM 6949 / MB).